The primary structure comprises 606 residues: DNA primase (606 aa).

Residues 40-64 form a CHC2-type zinc finger; the sequence is CPFHQEKTPSFYVVPEKRFYFCHGC. The region spanning 256 to 349 is the Toprim domain; the sequence is KAAVLVEGYF…DPDTFARREG (94 aa). Positions 262, 307, and 309 each coordinate Mg(2+). Residues 429–451 form a disordered region; sequence VPLPKPAGGDAPPSSPNRPAPPL. Positions 441 to 451 are enriched in pro residues; the sequence is PSSPNRPAPPL.

This sequence belongs to the DnaG primase family. As to quaternary structure, monomer. Interacts with DnaB. Requires Zn(2+) as cofactor. Mg(2+) serves as cofactor.

It carries out the reaction ssDNA + n NTP = ssDNA/pppN(pN)n-1 hybrid + (n-1) diphosphate.. Its function is as follows. RNA polymerase that catalyzes the synthesis of short RNA molecules used as primers for DNA polymerase during DNA replication. This is DNA primase from Myxococcus xanthus.